We begin with the raw amino-acid sequence, 256 residues long: Acetyl-coenzyme A carboxylase carboxyl transferase subunit alpha (256 aa).

The CoA carboxyltransferase C-terminal domain maps to 1–236 (MTKITRIIKE…KEEIAAELDS (236 aa)).

This sequence belongs to the AccA family. As to quaternary structure, acetyl-CoA carboxylase is a heterohexamer composed of biotin carboxyl carrier protein (AccB), biotin carboxylase (AccC) and two subunits each of ACCase subunit alpha (AccA) and ACCase subunit beta (AccD).

It localises to the cytoplasm. The enzyme catalyses N(6)-carboxybiotinyl-L-lysyl-[protein] + acetyl-CoA = N(6)-biotinyl-L-lysyl-[protein] + malonyl-CoA. Its pathway is lipid metabolism; malonyl-CoA biosynthesis; malonyl-CoA from acetyl-CoA: step 1/1. Component of the acetyl coenzyme A carboxylase (ACC) complex. First, biotin carboxylase catalyzes the carboxylation of biotin on its carrier protein (BCCP) and then the CO(2) group is transferred by the carboxyltransferase to acetyl-CoA to form malonyl-CoA. In Streptococcus sanguinis (strain SK36), this protein is Acetyl-coenzyme A carboxylase carboxyl transferase subunit alpha.